We begin with the raw amino-acid sequence, 326 residues long: uncharacterized protein (326 aa).

Belongs to the ParB family.

This is an uncharacterized protein from Acidianus two-tailed virus (ATV).